Consider the following 316-residue polypeptide: Apolipoprotein E (316 aa).

The signal sequence occupies residues 1–18 (MKVLWVAVVVALLAGCQA). Thr-32 carries an O-linked (GalNAc...) threonine glycan. 8 consecutive repeat copies span residues 79-100 (ALME…GQLG), 101-122 (PMAQ…ARLG), 123-144 (SDME…AMLG), 145-166 (QSTE…KRLL), 167-188 (RDAD…EGAE), 189-210 (RSLS…SRAA), 211-232 (TLST…QKLH), and 233-254 (GRLE…QQLE). Residues 79 to 254 (ALMEETMKEV…RLDKIRQQLE (176 aa)) form an 8 X 22 AA approximate tandem repeats region. Met-142 is subject to Methionine sulfoxide. A Phosphoserine modification is found at Ser-146. Residues 157–167 (HLRKLPKRLLR) form an LDL and other lipoprotein receptors binding region. 161 to 164 (LPKR) contacts heparin. The tract at residues 209-289 (AATLSTLAGQ…SWFEPLVEDM (81 aa)) is lipid-binding and lipoprotein association. The O-linked (GalNAc...) threonine glycan is linked to Thr-211. Residue 228-235 (RQKLHGRL) participates in heparin binding. Residues 265–316 (NQMRLQAEAFQARLRSWFEPLVEDMQRQWAGLVEKVQLALRPSPTSPPSENH) form a homooligomerization region. Residues 277–289 (RLRSWFEPLVEDM) form a specificity for association with VLDL region. A glycan (O-linked (GalNAc...) threonine) is linked at Thr-309. Residue Ser-310 is glycosylated (O-linked (GalNAc...) serine).

The protein belongs to the apolipoprotein A1/A4/E family. In terms of assembly, homotetramer. May interact with ABCA1; functionally associated with ABCA1 in the biogenesis of HDLs. May interact with APP/A4 amyloid-beta peptide; the interaction is extremely stable in vitro but its physiological significance is unclear. May interact with MAPT. May interact with MAP2. In the cerebrospinal fluid, interacts with secreted SORL1. Interacts with PMEL; this allows the loading of PMEL luminal fragment on ILVs to induce fibril nucleation. Post-translationally, APOE exists as multiple glycosylated and sialylated glycoforms within cells and in plasma. The extent of glycosylation and sialylation are tissue and context specific. Glycated in plasma VLDL. In terms of processing, phosphorylated by FAM20C in the extracellular medium.

The protein resides in the secreted. It localises to the extracellular space. The protein localises to the extracellular matrix. It is found in the extracellular vesicle. Its subcellular location is the endosome. The protein resides in the multivesicular body. In terms of biological role, APOE is an apolipoprotein, a protein associating with lipid particles, that mainly functions in lipoprotein-mediated lipid transport between organs via the plasma and interstitial fluids. APOE is a core component of plasma lipoproteins and is involved in their production, conversion and clearance. Apolipoproteins are amphipathic molecules that interact both with lipids of the lipoprotein particle core and the aqueous environment of the plasma. As such, APOE associates with chylomicrons, chylomicron remnants, very low density lipoproteins (VLDL) and intermediate density lipoproteins (IDL) but shows a preferential binding to high-density lipoproteins (HDL). It also binds a wide range of cellular receptors including the LDL receptor/LDLR and the very low-density lipoprotein receptor/VLDLR that mediate the cellular uptake of the APOE-containing lipoprotein particles. Finally, APOE also has a heparin-binding activity and binds heparan-sulfate proteoglycans on the surface of cells, a property that supports the capture and the receptor-mediated uptake of APOE-containing lipoproteins by cells. In Bos taurus (Bovine), this protein is Apolipoprotein E (APOE).